The sequence spans 177 residues: Large ribosomal subunit protein uL6 (177 aa).

It belongs to the universal ribosomal protein uL6 family. Part of the 50S ribosomal subunit.

Functionally, this protein binds to the 23S rRNA, and is important in its secondary structure. It is located near the subunit interface in the base of the L7/L12 stalk, and near the tRNA binding site of the peptidyltransferase center. This Mesorhizobium japonicum (strain LMG 29417 / CECT 9101 / MAFF 303099) (Mesorhizobium loti (strain MAFF 303099)) protein is Large ribosomal subunit protein uL6.